We begin with the raw amino-acid sequence, 286 residues long: UDP-3-O-acyl-N-acetylglucosamine deacetylase (286 aa).

Zn(2+) is bound by residues His-79, His-237, and Asp-241. The active-site Proton donor is the His-264.

Belongs to the LpxC family. The cofactor is Zn(2+).

The catalysed reaction is a UDP-3-O-[(3R)-3-hydroxyacyl]-N-acetyl-alpha-D-glucosamine + H2O = a UDP-3-O-[(3R)-3-hydroxyacyl]-alpha-D-glucosamine + acetate. It functions in the pathway glycolipid biosynthesis; lipid IV(A) biosynthesis; lipid IV(A) from (3R)-3-hydroxytetradecanoyl-[acyl-carrier-protein] and UDP-N-acetyl-alpha-D-glucosamine: step 2/6. Its function is as follows. Catalyzes the hydrolysis of UDP-3-O-myristoyl-N-acetylglucosamine to form UDP-3-O-myristoylglucosamine and acetate, the committed step in lipid A biosynthesis. This Chlamydia muridarum (strain MoPn / Nigg) protein is UDP-3-O-acyl-N-acetylglucosamine deacetylase.